The sequence spans 425 residues: High-affinity branched-chain amino acid transport system permease protein LivM (425 aa).

The next 11 helical transmembrane spans lie at 6 to 26 (IAMA…FMGV), 45 to 65 (WQWV…RPAF), 92 to 112 (FLVA…RGTV), 120 to 140 (IYII…LLVL), 145 to 165 (FYAI…LGFW), 167 to 187 (CLPI…FPVL), 191 to 211 (GDYL…LLLN), 260 to 280 (RVIF…FVIN), 311 to 331 (IKLT…TLFA), 353 to 373 (IVVL…ILLV), and 387 to 407 (MLML…GLLP).

This sequence belongs to the binding-protein-dependent transport system permease family. LivHM subfamily.

It is found in the cell inner membrane. Its function is as follows. Part of the binding-protein-dependent transport system for branched-chain amino acids. Probably responsible for the translocation of the substrates across the membrane. This chain is High-affinity branched-chain amino acid transport system permease protein LivM (livM), found in Escherichia coli (strain K12).